The sequence spans 280 residues: Undecaprenyl-diphosphatase (280 aa).

Transmembrane regions (helical) follow at residues 3–23, 45–65, 88–108, 115–135, 150–170, 191–211, 225–245, and 255–275; these read IILL…EFLP, VDLF…YDYW, QLGL…FTFA, LFDP…IFYV, VGLK…IPGT, AEFS…LDLL, VLGI…RLLV, and IFAW…WGFG.

Belongs to the UppP family.

It is found in the cell inner membrane. It catalyses the reaction di-trans,octa-cis-undecaprenyl diphosphate + H2O = di-trans,octa-cis-undecaprenyl phosphate + phosphate + H(+). Its function is as follows. Catalyzes the dephosphorylation of undecaprenyl diphosphate (UPP). Confers resistance to bacitracin. In Psychrobacter arcticus (strain DSM 17307 / VKM B-2377 / 273-4), this protein is Undecaprenyl-diphosphatase.